The primary structure comprises 40 residues: Photosystem II reaction center protein L (40 aa).

A helical membrane pass occupies residues 19-39 (SLFLGLLLVFVLGILFSSYFF).

Belongs to the PsbL family. In terms of assembly, PSII is composed of 1 copy each of membrane proteins PsbA, PsbB, PsbC, PsbD, PsbE, PsbF, PsbH, PsbI, PsbJ, PsbK, PsbL, PsbM, PsbT, PsbX, PsbY, PsbZ, Psb30/Ycf12, peripheral proteins PsbO, CyanoQ (PsbQ), PsbU, PsbV and a large number of cofactors. It forms dimeric complexes.

The protein resides in the cellular thylakoid membrane. One of the components of the core complex of photosystem II (PSII). PSII is a light-driven water:plastoquinone oxidoreductase that uses light energy to abstract electrons from H(2)O, generating O(2) and a proton gradient subsequently used for ATP formation. It consists of a core antenna complex that captures photons, and an electron transfer chain that converts photonic excitation into a charge separation. This subunit is found at the monomer-monomer interface and is required for correct PSII assembly and/or dimerization. In Synechococcus elongatus (strain ATCC 33912 / PCC 7942 / FACHB-805) (Anacystis nidulans R2), this protein is Photosystem II reaction center protein L.